The chain runs to 392 residues: MTANAPITQDVMTLPRKLPEGGPVNIVGLTREELLAALVAAGTPERQAKMRAGQVWQWVYHWGVRDFAQMTNLAKDYRALLAEHFAIVLPEVVTRQISADGTRKYLIRIAGGHEVETVYIPEEGRGTLCVSSQVGCTLTCSFCHTGTQKLVRNLTAAEIVGQLMLVRDDLGEWPERGAPKDETRLVSNLVLMGMGEPLYNFENVRNAMKVVMDGEGLSLSRRRITLSTSGVVPEIARTAEEIGCQLAISFHATTDEVRDILVPINKRWNIRTLLDSLRDYPRLSNSERITFEYVMLDGVNDTDADARRLVKLISGIPSKINLIPFNEWPGAPYRRSTPERIAAFADIIYKAGYASPIRTPRGEDIMAACGQLKSATERARKSRAQIAAETGL.

Glu-116 serves as the catalytic Proton acceptor. The Radical SAM core domain occupies 122 to 364 (EEGRGTLCVS…SPIRTPRGED (243 aa)). Cysteines 129 and 369 form a disulfide. Positions 136, 140, and 143 each coordinate [4Fe-4S] cluster. S-adenosyl-L-methionine contacts are provided by residues 195-196 (GE), Ser-227, 249-251 (SFH), and Asn-326. Cys-369 acts as the S-methylcysteine intermediate in catalysis.

The protein belongs to the radical SAM superfamily. RlmN family. Requires [4Fe-4S] cluster as cofactor.

It is found in the cytoplasm. The catalysed reaction is adenosine(2503) in 23S rRNA + 2 reduced [2Fe-2S]-[ferredoxin] + 2 S-adenosyl-L-methionine = 2-methyladenosine(2503) in 23S rRNA + 5'-deoxyadenosine + L-methionine + 2 oxidized [2Fe-2S]-[ferredoxin] + S-adenosyl-L-homocysteine. It catalyses the reaction adenosine(37) in tRNA + 2 reduced [2Fe-2S]-[ferredoxin] + 2 S-adenosyl-L-methionine = 2-methyladenosine(37) in tRNA + 5'-deoxyadenosine + L-methionine + 2 oxidized [2Fe-2S]-[ferredoxin] + S-adenosyl-L-homocysteine. Its function is as follows. Specifically methylates position 2 of adenine 2503 in 23S rRNA and position 2 of adenine 37 in tRNAs. m2A2503 modification seems to play a crucial role in the proofreading step occurring at the peptidyl transferase center and thus would serve to optimize ribosomal fidelity. This chain is Dual-specificity RNA methyltransferase RlmN, found in Cereibacter sphaeroides (strain ATCC 17029 / ATH 2.4.9) (Rhodobacter sphaeroides).